The primary structure comprises 788 residues: Protein TRS1 (788 aa).

2 disordered regions span residues 1 to 82 and 610 to 663; these read MAQR…NFWH and IHKK…PSRV. Gly residues predominate over residues 16–25; it reads RGRGAGGPSG. Low complexity predominate over residues 26–56; it reads VGSSPPSSCVPMGATSTAGTGASAAPTATPG. Residues 74 to 248 are RNA-binding; the sequence is SGNNSNFWHG…HGAGEVVRLY (175 aa). Residues 651 to 660 show a composition bias toward basic and acidic residues; the sequence is LRRDDEDWKP. The segment at 672 to 788 is interaction with host EIF2AK2/PKR; it reads LDETFWVLGS…NVATHYHYNA (117 aa).

Belongs to the herpesviridae US22 family. In terms of assembly, interacts with host EIF2AK2/PKR; this interaction retains EIF2AK2 to the host nucleus and prevents its activation. Interaction (via N-terminus) with host BECN1; this interaction inhibits host autophagy. Interacts with the viral DNA polymerase accessory subunit UL44. Interacts with host HSPA5.

Its subcellular location is the virion. The protein resides in the host cytoplasm. The protein localises to the host nucleus. Functionally, inhibits the establishment of the antiviral state in the infected cell. Prevents the phosphorylation of the host eukaryotic translation initiation factor eIF-2alpha/EIF2S1 and thus the shutoff of viral and cellular protein synthesis by directly interacting with EIF2AK2/PKR. Prevents stress granule formation in response to eIF-2alpha/EIF2S1 phosphorylation, thereby rescuing viral replication and protein synthesis. Also inhibits host autophagy by interacting with host Beclin-1/BECN1. This Human cytomegalovirus (strain Merlin) (HHV-5) protein is Protein TRS1 (TRS1).